The primary structure comprises 486 residues: Cysteine--tRNA ligase (486 aa).

Cys27 lines the Zn(2+) pocket. A 'HIGH' region motif is present at residues 29 to 39; that stretch reads PTTYNFIHLGN. Positions 207, 232, and 236 each coordinate Zn(2+). Positions 264–268 match the 'KMSKS' region motif; that stretch reads KMSKS. Lys267 is a binding site for ATP.

The protein belongs to the class-I aminoacyl-tRNA synthetase family. Monomer. The cofactor is Zn(2+).

Its subcellular location is the cytoplasm. The catalysed reaction is tRNA(Cys) + L-cysteine + ATP = L-cysteinyl-tRNA(Cys) + AMP + diphosphate. The protein is Cysteine--tRNA ligase of Desulforamulus reducens (strain ATCC BAA-1160 / DSM 100696 / MI-1) (Desulfotomaculum reducens).